The chain runs to 914 residues: Sensor protein TorS (914 aa).

Residues 1–8 are Cytoplasmic-facing; that stretch reads MNLTLTRR. Residues 9–29 traverse the membrane as a helical segment; it reads LWMGFALMALLTLTSTLVGWY. The Periplasmic portion of the chain corresponds to 30-332; it reads NLRFISQVEK…EKASARGQYS (303 aa). Residues 333-353 traverse the membrane as a helical segment; the sequence is LLLLGMVSLCALILILWRVVY. One can recognise an HAMP domain in the interval 354–407; sequence RSVTRPLAEQTQALQRLLDGDIDSPFPETAGVRELDTIGRLMDAFRSNVHALNR. The Cytoplasmic portion of the chain corresponds to 354–914; that stretch reads RSVTRPLAEQ…WLHKKDLNAI (561 aa). One can recognise a Histidine kinase domain in the interval 450–664; it reads AMSHEIRTPL…CFCLRLPLRV (215 aa). Residue histidine 453 is modified to Phosphohistidine; by autocatalysis. Residues 683–798 form the Response regulatory domain; that stretch reads RLLLIEDNPL…VLGQLLAHYL (116 aa). Aspartate 733 bears the 4-aspartylphosphate mark. The HPt domain maps to 821 to 914; that stretch reads GTEKIHEWLV…WLHKKDLNAI (94 aa). Histidine 860 is modified (phosphohistidine).

In terms of assembly, may form homomultimers. Seems to interact with TorT and TorC apocytochrome. In terms of processing, activation requires a sequential transfer of a phosphate group from a His in the primary transmitter domain, to an Asp in the receiver domain and to a His in the secondary transmitter domain.

Its subcellular location is the cell inner membrane. The catalysed reaction is ATP + protein L-histidine = ADP + protein N-phospho-L-histidine.. Its activity is regulated as follows. Inhibited by TorC apocytochrome. Its function is as follows. Member of the two-component regulatory system TorS/TorR involved in the anaerobic utilization of trimethylamine-N-oxide (TMAO). Detects the presence of TMAO in the medium and, in response, activates TorR via a four-step phosphorelay. When TMAO is removed, TorS can dephosphorylate TorR, probably by a reverse phosphorelay involving His-860 and Asp-733. This Escherichia coli (strain K12) protein is Sensor protein TorS (torS).